The chain runs to 616 residues: MALLQISEPGLSAAPHQRRLAAGIDLGTTNSLVATVRSGQAETLPDHQGRYLLPSVVNYHASGLTVGYEARLNAAQDPVNTISSVKRMMGRSLADIQTRYPHLPYQLQASENGLPMIQTAGGLLNPVRVSADILKALAARATEALAGDLDGVVITVPAYFDDAQRQGTKDAARLAGLHVLRLLNEPTAAAIAYGLDSGQEGVIAVYDLGGGTFDISILRLSRGVFEVLATGGDSALGGDDFDHLLADYLREQAGLSDRSDNRLQRELLDAAIAAKIALSDADVAHVEVGGWQGDITRSQFNDLIAPLVKRTLMACRRALKDAGVEAQEVLEVVMVGGSTRVPLVRERVGEFFGRTPLTSIDPDKVVAIGAAIQADILVGNKPDSELLLLDVIPLSLGLETMGGLVEKVIPRNTTIPVARAQEFTTFKDGQTAMSIHVMQGERELVQDCRSLARFALRGIPALPAGGAHIRVTFQVDADGLLSVTAMEKSTGVEASIQVKPSYGLTDGEIANMIKDSMSYAEQDIQARMLAEQKVEAARVLESLESALAADAALLSAAERQVIDAAAEQVRAAAAGEDADAIKEAIKNIDTQTQEFAARRMDQSVRAALKGQSVDEV.

It belongs to the heat shock protein 70 family.

Chaperone involved in the maturation of iron-sulfur cluster-containing proteins. Has a low intrinsic ATPase activity which is markedly stimulated by HscB. Involved in the maturation of IscU. The sequence is that of Chaperone protein HscA from Klebsiella pneumoniae (strain 342).